The sequence spans 215 residues: Deoxyribose-phosphate aldolase (215 aa).

Asp-89 serves as the catalytic Proton donor/acceptor. The active-site Schiff-base intermediate with acetaldehyde is Lys-150. Residue Lys-174 is the Proton donor/acceptor of the active site.

This sequence belongs to the DeoC/FbaB aldolase family. DeoC type 1 subfamily.

The protein resides in the cytoplasm. The catalysed reaction is 2-deoxy-D-ribose 5-phosphate = D-glyceraldehyde 3-phosphate + acetaldehyde. Its pathway is carbohydrate degradation; 2-deoxy-D-ribose 1-phosphate degradation; D-glyceraldehyde 3-phosphate and acetaldehyde from 2-deoxy-alpha-D-ribose 1-phosphate: step 2/2. Its function is as follows. Catalyzes a reversible aldol reaction between acetaldehyde and D-glyceraldehyde 3-phosphate to generate 2-deoxy-D-ribose 5-phosphate. The protein is Deoxyribose-phosphate aldolase of Natronomonas pharaonis (strain ATCC 35678 / DSM 2160 / CIP 103997 / JCM 8858 / NBRC 14720 / NCIMB 2260 / Gabara) (Halobacterium pharaonis).